Reading from the N-terminus, the 419-residue chain is Tubby-like protein 4 (419 aa).

The segment at 1 to 96 (MAATKREPLR…EREEEEEGSS (96 aa)) is disordered. A compositionally biased stretch (basic and acidic residues) spans 33 to 57 (AKEKEKENEVPTEIGRGKDGGEKKP).

Belongs to the TUB family.

In Oryza sativa subsp. japonica (Rice), this protein is Tubby-like protein 4 (TULP4).